Consider the following 354-residue polypeptide: UDP-3-O-acylglucosamine N-acyltransferase (354 aa).

His-258 (proton acceptor) is an active-site residue.

It belongs to the transferase hexapeptide repeat family. LpxD subfamily. Homotrimer.

It catalyses the reaction a UDP-3-O-[(3R)-3-hydroxyacyl]-alpha-D-glucosamine + a (3R)-hydroxyacyl-[ACP] = a UDP-2-N,3-O-bis[(3R)-3-hydroxyacyl]-alpha-D-glucosamine + holo-[ACP] + H(+). It functions in the pathway bacterial outer membrane biogenesis; LPS lipid A biosynthesis. Catalyzes the N-acylation of UDP-3-O-acylglucosamine using 3-hydroxyacyl-ACP as the acyl donor. Is involved in the biosynthesis of lipid A, a phosphorylated glycolipid that anchors the lipopolysaccharide to the outer membrane of the cell. In Sinorhizobium fredii (strain NBRC 101917 / NGR234), this protein is UDP-3-O-acylglucosamine N-acyltransferase.